A 643-amino-acid polypeptide reads, in one-letter code: Protein ecdysoneless homolog (643 aa).

Disordered stretches follow at residues 428-458 and 501-600; these read EFYN…NNFD and IESM…FTPV. The segment covering 446–456 has biased composition (polar residues); that stretch reads AGSSSDANMNN. Positions 528–543 are enriched in acidic residues; sequence MDFDDVEDDSEGEESN. The segment covering 564–580 has biased composition (polar residues); sequence NSTLEKSFENVNQQHSS. The span at 581–592 shows a compositional bias: basic and acidic residues; the sequence is KQNEESSKTRDE.

It belongs to the ECD family.

In Arabidopsis thaliana (Mouse-ear cress), this protein is Protein ecdysoneless homolog.